We begin with the raw amino-acid sequence, 691 residues long: Threonine--tRNA ligase (691 aa).

The region spanning 1-66 (MSAPARPAPA…DADVDVIPVT (66 aa)) is the TGS domain. A catalytic region spans residues 265–571 (DHRKLGVELD…LTEHYAGAFP (307 aa)). Zn(2+) contacts are provided by Cys370, His421, and His548.

This sequence belongs to the class-II aminoacyl-tRNA synthetase family. In terms of assembly, homodimer. Zn(2+) is required as a cofactor.

It localises to the cytoplasm. It carries out the reaction tRNA(Thr) + L-threonine + ATP = L-threonyl-tRNA(Thr) + AMP + diphosphate + H(+). Catalyzes the attachment of threonine to tRNA(Thr) in a two-step reaction: L-threonine is first activated by ATP to form Thr-AMP and then transferred to the acceptor end of tRNA(Thr). Also edits incorrectly charged L-seryl-tRNA(Thr). The polypeptide is Threonine--tRNA ligase (Mycolicibacterium vanbaalenii (strain DSM 7251 / JCM 13017 / BCRC 16820 / KCTC 9966 / NRRL B-24157 / PYR-1) (Mycobacterium vanbaalenii)).